The primary structure comprises 354 residues: Thiamine thiazole synthase 2, chloroplastic (354 aa).

The N-terminal 44 residues, 1–44, are a transit peptide targeting the chloroplast; that stretch reads MATTAASSLLKSSFAGSRLPSATRTTTPSSVAVATPRAGGGPIR. The interval 17–49 is disordered; sequence SRLPSATRTTTPSSVAVATPRAGGGPIRASISS. The segment covering 20–32 has biased composition (polar residues); the sequence is PSATRTTTPSSVA. Residues A97, 117 to 118, G125, and V190 contribute to the substrate site; that span reads EQ. A 2,3-didehydroalanine (Cys) modification is found at C219. Substrate-binding positions include D221, H236, M288, and 298-300; that span reads RMG.

Belongs to the THI4 family. Homooctamer. Fe cation is required as a cofactor. In terms of processing, during the catalytic reaction, a sulfide is transferred from Cys-219 to a reaction intermediate, generating a dehydroalanine residue. As to expression, highest expression in developing embryos and green leaves and a very low level expression seen in endosperm, roots, etiolated shoots and immature ears.

It is found in the plastid. The protein resides in the chloroplast. It carries out the reaction [ADP-thiazole synthase]-L-cysteine + glycine + NAD(+) = [ADP-thiazole synthase]-dehydroalanine + ADP-5-ethyl-4-methylthiazole-2-carboxylate + nicotinamide + 3 H2O + 2 H(+). Functionally, involved in biosynthesis of the thiamine precursor thiazole. Catalyzes the conversion of NAD and glycine to adenosine diphosphate 5-(2-hydroxyethyl)-4-methylthiazole-2-carboxylic acid (ADT), an adenylated thiazole intermediate. The reaction includes an iron-dependent sulfide transfer from a conserved cysteine residue of the protein to a thiazole intermediate. The enzyme can only undergo a single turnover, which suggests it is a suicide enzyme. May have additional roles in adaptation to various stress conditions and in DNA damage tolerance. The polypeptide is Thiamine thiazole synthase 2, chloroplastic (Zea mays (Maize)).